Consider the following 430-residue polypeptide: CC-adding tRNA nucleotidyltransferase (430 aa).

33–36 (GCVR) provides a ligand contact to CTP. D46 and D48 together coordinate Mg(2+). CTP is bound by residues 108–109 (RD), N113, 150–159 (DPLRIVRAYR), and R190.

The protein belongs to the tRNA nucleotidyltransferase/poly(A) polymerase family. Mg(2+) is required as a cofactor.

The enzyme catalyses a tRNA precursor + 2 CTP = a tRNA with a 3' CC end + 2 diphosphate. TRNA nucleotidyltransferase involved in the synthesis of the tRNA CCA terminus. Adds the two cytidine residues to tRNA. The chain is CC-adding tRNA nucleotidyltransferase from Geobacter sulfurreducens (strain ATCC 51573 / DSM 12127 / PCA).